Consider the following 484-residue polypeptide: Protein nucleotidyltransferase YdiU (484 aa).

Residues Gly-81, Gly-83, Arg-84, Lys-103, Asp-115, Gly-116, Arg-166, and Arg-173 each contribute to the ATP site. Asp-244 functions as the Proton acceptor in the catalytic mechanism. Residues Asn-245 and Asp-254 each contribute to the Mg(2+) site. Asp-254 serves as a coordination point for ATP.

This sequence belongs to the SELO family. Mg(2+) serves as cofactor. Mn(2+) is required as a cofactor.

The enzyme catalyses L-seryl-[protein] + ATP = 3-O-(5'-adenylyl)-L-seryl-[protein] + diphosphate. It catalyses the reaction L-threonyl-[protein] + ATP = 3-O-(5'-adenylyl)-L-threonyl-[protein] + diphosphate. It carries out the reaction L-tyrosyl-[protein] + ATP = O-(5'-adenylyl)-L-tyrosyl-[protein] + diphosphate. The catalysed reaction is L-histidyl-[protein] + UTP = N(tele)-(5'-uridylyl)-L-histidyl-[protein] + diphosphate. The enzyme catalyses L-seryl-[protein] + UTP = O-(5'-uridylyl)-L-seryl-[protein] + diphosphate. It catalyses the reaction L-tyrosyl-[protein] + UTP = O-(5'-uridylyl)-L-tyrosyl-[protein] + diphosphate. Functionally, nucleotidyltransferase involved in the post-translational modification of proteins. It can catalyze the addition of adenosine monophosphate (AMP) or uridine monophosphate (UMP) to a protein, resulting in modifications known as AMPylation and UMPylation. This Shewanella baltica (strain OS195) protein is Protein nucleotidyltransferase YdiU.